Consider the following 432-residue polypeptide: Serine hydroxymethyltransferase (432 aa).

Residues L127 and 131 to 133 (GHL) contribute to the (6S)-5,6,7,8-tetrahydrofolate site. K236 carries the post-translational modification N6-(pyridoxal phosphate)lysine.

Belongs to the SHMT family. As to quaternary structure, homodimer. Requires pyridoxal 5'-phosphate as cofactor.

The protein resides in the cytoplasm. It carries out the reaction (6R)-5,10-methylene-5,6,7,8-tetrahydrofolate + glycine + H2O = (6S)-5,6,7,8-tetrahydrofolate + L-serine. It functions in the pathway one-carbon metabolism; tetrahydrofolate interconversion. It participates in amino-acid biosynthesis; glycine biosynthesis; glycine from L-serine: step 1/1. Catalyzes the reversible interconversion of serine and glycine with tetrahydrofolate (THF) serving as the one-carbon carrier. This reaction serves as the major source of one-carbon groups required for the biosynthesis of purines, thymidylate, methionine, and other important biomolecules. Also exhibits THF-independent aldolase activity toward beta-hydroxyamino acids, producing glycine and aldehydes, via a retro-aldol mechanism. This Rhizobium etli (strain ATCC 51251 / DSM 11541 / JCM 21823 / NBRC 15573 / CFN 42) protein is Serine hydroxymethyltransferase.